A 233-amino-acid polypeptide reads, in one-letter code: Purine nucleoside phosphorylase DeoD-type (233 aa).

His-4 provides a ligand contact to a purine D-ribonucleoside. Phosphate-binding positions include Gly-20, Arg-24, Arg-43, and 87–90 (RIGT). Residues 179–181 (EME) and 203–204 (SD) contribute to the a purine D-ribonucleoside site. Asp-204 functions as the Proton donor in the catalytic mechanism.

The protein belongs to the PNP/UDP phosphorylase family. As to quaternary structure, homohexamer; trimer of homodimers.

The enzyme catalyses a purine D-ribonucleoside + phosphate = a purine nucleobase + alpha-D-ribose 1-phosphate. The catalysed reaction is a purine 2'-deoxy-D-ribonucleoside + phosphate = a purine nucleobase + 2-deoxy-alpha-D-ribose 1-phosphate. In terms of biological role, catalyzes the reversible phosphorolytic breakdown of the N-glycosidic bond in the beta-(deoxy)ribonucleoside molecules, with the formation of the corresponding free purine bases and pentose-1-phosphate. This chain is Purine nucleoside phosphorylase DeoD-type, found in Helicobacter pylori (strain HPAG1).